The chain runs to 251 residues: Imidazole glycerol phosphate synthase subunit HisF (251 aa).

Active-site residues include aspartate 13 and aspartate 132.

It belongs to the HisA/HisF family. In terms of assembly, heterodimer of HisH and HisF.

Its subcellular location is the cytoplasm. The catalysed reaction is 5-[(5-phospho-1-deoxy-D-ribulos-1-ylimino)methylamino]-1-(5-phospho-beta-D-ribosyl)imidazole-4-carboxamide + L-glutamine = D-erythro-1-(imidazol-4-yl)glycerol 3-phosphate + 5-amino-1-(5-phospho-beta-D-ribosyl)imidazole-4-carboxamide + L-glutamate + H(+). It functions in the pathway amino-acid biosynthesis; L-histidine biosynthesis; L-histidine from 5-phospho-alpha-D-ribose 1-diphosphate: step 5/9. Its function is as follows. IGPS catalyzes the conversion of PRFAR and glutamine to IGP, AICAR and glutamate. The HisF subunit catalyzes the cyclization activity that produces IGP and AICAR from PRFAR using the ammonia provided by the HisH subunit. In Campylobacter concisus (strain 13826), this protein is Imidazole glycerol phosphate synthase subunit HisF.